The primary structure comprises 872 residues: MLNVFSKIFGTRNDKEVKKYRKKADAITALESKYTDLSDDELKNEFQKLKELVQKGEKTLDNVLFQSFAITREASRRVLNMRPYDVQLIGGMVLHEGRIAEMKTGEGKTLVGSLAVSLNALEGKGVHVVTVNDYLASRDANELRPLYEFLGFSVGAVVGGLKDDEQRREQYACDITYGTNNEFGFDYLRDNMCFDIKDKVQRGHNYVIVDEVDSILIDEARTPLIISGPTNHKNSNYLKANEIALKLEKGELIEPKSAAEKPITTGDFIVDEKNRAVTLTEQGHEAVEKLFGVDNLYSIENAMLSHSLDQALKANYIFKKDVDYVVKDNQIIIVDEFTGRLSEGRRFSEGLHQALEAKEGVTIQDESQTLADITFQNYFRMYKKLAGMTGTAQTEATEFAQIYNLDVVSIPTNIPVKRIDKNDLIYKSEKEKFEAVCNKIKELHEKGQPVLVGTASIEKSEKLHKILVDKKIPHTVLNAKQHEKEGKIIADAGQKGAVTIATNMAGRGVDIKLTKEILDLGGLAIIGTERHESRRIDNQLRGRSGRQGDVGESQFYLSLEDNLLRIFGSDRIKGIMERLGIEEGEHIESRMVTRAVENAQKKVESMHFESRKHLLEYDDVANQQRKVIYSFRNDLLKPDYDITSKIDENRIEYVQNLLTEANITSGMAEDDFNYEFIVNRFLEDLHFKINVEDIKKESYEELEEHLISILKDVYDKKMSVTSLEQKSEIERILYLQILDSAWREHLYAMDTLKTGIGLRGYNQKDPLVEYKKESYNMFIELIGNIKNEIIKILFTIQLQSQEDKQKEQEALAKMKEQMEKSTEHITTNIAQEAVKNSDKKIARNEPCPCGSGLKYKQCCGKSGPKIGLAAGK.

ATP-binding positions include Gln87, 105–109 (GEGKT), and Asp510. Residues Cys847, Cys849, Cys858, and Cys859 each coordinate Zn(2+).

It belongs to the SecA family. In terms of assembly, monomer and homodimer. Part of the essential Sec protein translocation apparatus which comprises SecA, SecYEG and auxiliary proteins SecDF-YajC and YidC. Zn(2+) is required as a cofactor.

It localises to the cell inner membrane. Its subcellular location is the cytoplasm. It carries out the reaction ATP + H2O + cellular proteinSide 1 = ADP + phosphate + cellular proteinSide 2.. Part of the Sec protein translocase complex. Interacts with the SecYEG preprotein conducting channel. Has a central role in coupling the hydrolysis of ATP to the transfer of proteins into and across the cell membrane, serving as an ATP-driven molecular motor driving the stepwise translocation of polypeptide chains across the membrane. This is Protein translocase subunit SecA from Aliarcobacter butzleri (strain RM4018) (Arcobacter butzleri).